A 108-amino-acid chain; its full sequence is uncharacterized protein (108 aa).

This is an uncharacterized protein from Bacillus subtilis (strain 168).